Here is a 211-residue protein sequence, read N- to C-terminus: Ribosome maturation factor RimM (211 aa).

The 72-residue stretch at 111 to 182 (PDAWYDHQLV…TLVITPPLGL (72 aa)) folds into the PRC barrel domain. The tract at residues 184-211 (EEIPDEQPTPSATSDAEPGSAPEGDDAR) is disordered.

It belongs to the RimM family. In terms of assembly, binds ribosomal protein uS19.

It is found in the cytoplasm. Its function is as follows. An accessory protein needed during the final step in the assembly of 30S ribosomal subunit, possibly for assembly of the head region. Essential for efficient processing of 16S rRNA. May be needed both before and after RbfA during the maturation of 16S rRNA. It has affinity for free ribosomal 30S subunits but not for 70S ribosomes. The chain is Ribosome maturation factor RimM from Clavibacter sepedonicus (Clavibacter michiganensis subsp. sepedonicus).